Reading from the N-terminus, the 77-residue chain is Exodeoxyribonuclease 7 small subunit (77 aa).

Belongs to the XseB family. Heterooligomer composed of large and small subunits.

It is found in the cytoplasm. It carries out the reaction Exonucleolytic cleavage in either 5'- to 3'- or 3'- to 5'-direction to yield nucleoside 5'-phosphates.. In terms of biological role, bidirectionally degrades single-stranded DNA into large acid-insoluble oligonucleotides, which are then degraded further into small acid-soluble oligonucleotides. The sequence is that of Exodeoxyribonuclease 7 small subunit from Trichlorobacter lovleyi (strain ATCC BAA-1151 / DSM 17278 / SZ) (Geobacter lovleyi).